We begin with the raw amino-acid sequence, 472 residues long: Pyruvate kinase (472 aa).

Arginine 33 is a binding site for substrate. Residues asparagine 35, serine 37, and aspartate 67 each contribute to the K(+) site. Residue 35 to 38 (NFSH) participates in ATP binding. 2 residues coordinate ATP: arginine 74 and lysine 155. Glutamate 220 lines the Mg(2+) pocket. Residues glycine 243, aspartate 244, and threonine 276 each coordinate substrate. Aspartate 244 provides a ligand contact to Mg(2+).

It belongs to the pyruvate kinase family. Homotetramer. Mg(2+) serves as cofactor. Requires K(+) as cofactor.

The enzyme catalyses pyruvate + ATP = phosphoenolpyruvate + ADP + H(+). The protein operates within carbohydrate degradation; glycolysis; pyruvate from D-glyceraldehyde 3-phosphate: step 5/5. This chain is Pyruvate kinase (pyk), found in Mycobacterium tuberculosis (strain CDC 1551 / Oshkosh).